The following is a 440-amino-acid chain: Thymidine phosphorylase (440 aa).

It belongs to the thymidine/pyrimidine-nucleoside phosphorylase family. As to quaternary structure, homodimer.

It carries out the reaction thymidine + phosphate = 2-deoxy-alpha-D-ribose 1-phosphate + thymine. It participates in pyrimidine metabolism; dTMP biosynthesis via salvage pathway; dTMP from thymine: step 1/2. Functionally, the enzymes which catalyze the reversible phosphorolysis of pyrimidine nucleosides are involved in the degradation of these compounds and in their utilization as carbon and energy sources, or in the rescue of pyrimidine bases for nucleotide synthesis. This chain is Thymidine phosphorylase, found in Salmonella choleraesuis (strain SC-B67).